The following is a 200-amino-acid chain: dITP/XTP pyrophosphatase (200 aa).

Position 7-12 (7-12 (TSNKHK)) interacts with substrate. Residues Glu-38 and Asp-73 each contribute to the Mg(2+) site. Residue Asp-73 is the Proton acceptor of the active site. Substrate contacts are provided by residues Ser-74, 154-157 (FGYD), Lys-177, and 182-183 (HR).

Belongs to the HAM1 NTPase family. Homodimer. It depends on Mg(2+) as a cofactor.

The catalysed reaction is XTP + H2O = XMP + diphosphate + H(+). The enzyme catalyses dITP + H2O = dIMP + diphosphate + H(+). It catalyses the reaction ITP + H2O = IMP + diphosphate + H(+). Pyrophosphatase that catalyzes the hydrolysis of nucleoside triphosphates to their monophosphate derivatives, with a high preference for the non-canonical purine nucleotides XTP (xanthosine triphosphate), dITP (deoxyinosine triphosphate) and ITP. Seems to function as a house-cleaning enzyme that removes non-canonical purine nucleotides from the nucleotide pool, thus preventing their incorporation into DNA/RNA and avoiding chromosomal lesions. In Campylobacter jejuni subsp. jejuni serotype O:6 (strain 81116 / NCTC 11828), this protein is dITP/XTP pyrophosphatase.